The following is an 883-amino-acid chain: Putative GTP diphosphokinase RSH1, chloroplastic (883 aa).

The N-terminal 55 residues, 1–55 (MTSASSMSVSVECVNICNLTKGDGNARSDCSALSCAWKAPRALTGFLASTAHPPV), are a transit peptide targeting the chloroplast. The HD domain occupies 172–279 (FIIHPVAVAR…VKLADRLHNM (108 aa)). Residues 562 to 625 (LGSRVFVFTP…ENAEVVEIVT (64 aa)) form the TGS domain. Positions 710–726 (QSQDKSRDTTPAPQNGS) are enriched in polar residues. The tract at residues 710 to 746 (QSQDKSRDTTPAPQNGSVWAPKVNGKHNKAIKNSSSD) is disordered. The ACT domain occupies 796–867 (WLCVVSMDRK…LVLGVLGWSS (72 aa)).

The protein belongs to the RelA/SpoT family. As to quaternary structure, interacts with RPP5.

It is found in the plastid. The protein resides in the chloroplast. The enzyme catalyses GTP + ATP = guanosine 3'-diphosphate 5'-triphosphate + AMP. In terms of biological role, may be involved in a rapid plant ppGpp (guanosine 3'-diphosphate 5'-diphosphate)-mediated response to pathogens and other stresses. In Arabidopsis thaliana (Mouse-ear cress), this protein is Putative GTP diphosphokinase RSH1, chloroplastic (RSH1).